The primary structure comprises 471 residues: Phosphatidylserine synthase 2 (471 aa).

The interval 1–26 (MRRGERRVAGGSGSESPLLEGRRSTE) is disordered. Residues 1-40 (MRRGERRVAGGSGSESPLLEGRRSTESEVYDDGTNTFFWR) lie on the Cytoplasmic side of the membrane. 3 positions are modified to phosphoserine: Ser-12, Ser-14, and Ser-16. Residues 41-61 (AHTLTVLFILTCALGYVTLLE) form a helical membrane-spanning segment. The Lumenal portion of the chain corresponds to 62–74 (ETPQDTAYNTKRG). The chain crosses the membrane as a helical span at residues 75–95 (IVASILVFLCFGVTQAKDGPF). Over 96–104 (SRPHPAYWR) the chain is Cytoplasmic. A helical transmembrane segment spans residues 105-125 (FWLCVSVVYELFLIFILFQTV). At 126–291 (HDGRQFLKYV…EWKPASSLHR (166 aa)) the chain is on the lumenal side. Asn-159 carries an N-linked (GlcNAc...) asparagine glycan. Residues 292-312 (WLAVCGIILVFLLAELNTFYL) form a helical membrane-spanning segment. Lys-313 is a topological domain (cytoplasmic). A helical membrane pass occupies residues 314-334 (FVLWMPPEHYLVLLRLVFFVN). Over 335 to 354 (VGGVAMREIYDFMDELKPHR) the chain is Lumenal. The chain crosses the membrane as a helical span at residues 355–375 (KLGQQAWLVAAITVTELLIVV). The Cytoplasmic segment spans residues 376-381 (KYDPHT). The helical transmembrane segment at 382-402 (LTLSLPFYISQCWTLGSILVL) threads the bilayer. The Lumenal segment spans residues 403 to 471 (TWTVWRFFLR…PAEEGPSAAS (69 aa)). The tract at residues 423-471 (RQKQQSHQAINNGDGHPGPEDDLPGTGTAEEEGTTNDGVPAEEGPSAAS) is disordered.

The protein belongs to the phosphatidyl serine synthase family.

The protein localises to the endoplasmic reticulum membrane. The enzyme catalyses a 1,2-diacyl-sn-glycero-3-phosphoethanolamine + L-serine = a 1,2-diacyl-sn-glycero-3-phospho-L-serine + ethanolamine. It catalyses the reaction 1-hexadecanoyl-2-(9Z-octadecenoyl)-sn-glycero-3-phosphoethanolamine + L-serine = 1-hexadecanoyl-2-(9Z-octadecenoyl)-sn-glycero-3-phospho-L-serine + ethanolamine. The catalysed reaction is 1-hexadecanoyl-2-(4Z,7Z,10Z,13Z,16Z,19Z-docosahexaenoyl)-sn-glycero-3-phosphoethanolamine + L-serine = 1-hexadecanoyl-2-(4Z,7Z,10Z,13Z,16Z,19Z-docosahexaenoyl)-sn-glycero-3-phosphoserine + ethanolamine. It carries out the reaction 1-octadecanoyl-2-(5Z,8Z,11Z,14Z)-eicosatetraenoyl-sn-glycero-3-phosphoethanolamine + L-serine = 1-octadecanoyl-2-(5Z,8Z,11Z,14Z)-eicosatetraenoyl-sn-glycero-3-phosphoserine + ethanolamine. The enzyme catalyses 1-octadecanoyl-2-(4Z,7Z,10Z,13Z,16Z,19Z-docosahexaenoyl)-sn-glycero-3-phosphoethanolamine + L-serine = 1-octadecanoyl-2-(4Z,7Z,10Z,13Z,16Z,19Z-docosahexaenoyl)-sn-glycero-3-phosphoserine + ethanolamine. It catalyses the reaction 1-(1Z-octadecenyl)-2-(4Z,7Z,10Z,13Z,16Z,19Z-docosahexaenoyl)-sn-glycero-3-phosphoethanolamine + L-serine = 1-(1Z-octadecenyl)-2-(4Z,7Z,10Z,13Z,16Z,19Z-docosahexaenoyl)-sn-glycero-3-phospho-L-serine + ethanolamine. The catalysed reaction is 1-octadecanoyl-2-(9Z-octadecenoyl)-sn-glycero-3-phosphoethanolamine + L-serine = 1-octadecanoyl-2-(9Z-octadecenoyl)-sn-glycero-3-phospho-L-serine + ethanolamine. It carries out the reaction 1-(1Z-octadecenyl)-2-(9Z-octadecenoyl)-sn-glycero-3-phosphoethanolamine + L-serine = 1-(1Z-octadecenyl)-2-(9Z-octadecenoyl)-sn-glycero-3-phospho-L-serine + ethanolamine. The enzyme catalyses 1-(1Z-octadecenyl)-2-(5Z,8Z,11Z,14Z- eicosatetraenoyl)-sn-glycero-3-phosphoethanolamine + L-serine = 1-(1Z-octadecenyl)-2-(5Z,8Z,11Z,14Z-eicosatetraenoyl)-sn-glycero-3-phospho-L-serine + ethanolamine. It participates in phospholipid metabolism; phosphatidylserine biosynthesis. Catalyzes a base-exchange reaction in which the polar head group of phosphatidylethanolamine (PE) or phosphatidylcholine (PC) is replaced by L-serine. Catalyzes the conversion of phosphatatidylethanolamine and does not act on phosphatidylcholine. Can utilize both phosphatidylethanolamine (PE) plasmalogen and diacyl PE as substrate and the latter is six times better utilized, indicating the importance of an ester linkage at the sn-1 position. Although it shows no sn-1 fatty acyl preference, exhibits significant preference towards docosahexaenoic acid (22:6n-3) compared with 18:1 or 20:4 at the sn-2 position. The chain is Phosphatidylserine synthase 2 (Ptdss2) from Rattus norvegicus (Rat).